Here is a 337-residue protein sequence, read N- to C-terminus: Phosphate acyltransferase (337 aa).

This sequence belongs to the PlsX family. As to quaternary structure, homodimer. Probably interacts with PlsY.

Its subcellular location is the cytoplasm. The enzyme catalyses a fatty acyl-[ACP] + phosphate = an acyl phosphate + holo-[ACP]. It functions in the pathway lipid metabolism; phospholipid metabolism. In terms of biological role, catalyzes the reversible formation of acyl-phosphate (acyl-PO(4)) from acyl-[acyl-carrier-protein] (acyl-ACP). This enzyme utilizes acyl-ACP as fatty acyl donor, but not acyl-CoA. This is Phosphate acyltransferase from Hydrogenovibrio crunogenus (strain DSM 25203 / XCL-2) (Thiomicrospira crunogena).